The following is a 1246-amino-acid chain: DNA-directed RNA polymerase subunit beta (1246 aa).

Residues 1171–1246 (IDDDAGEMSL…EFDGYNDFKA (76 aa)) are disordered. Composition is skewed to acidic residues over residues 1202-1223 (DEEE…EDFE) and 1230-1240 (EYAEDDDEFDG).

This sequence belongs to the RNA polymerase beta chain family. In terms of assembly, the RNAP catalytic core consists of 2 alpha, 1 beta, 1 beta' and 1 omega subunit. When a sigma factor is associated with the core the holoenzyme is formed, which can initiate transcription.

It carries out the reaction RNA(n) + a ribonucleoside 5'-triphosphate = RNA(n+1) + diphosphate. Functionally, DNA-dependent RNA polymerase catalyzes the transcription of DNA into RNA using the four ribonucleoside triphosphates as substrates. The polypeptide is DNA-directed RNA polymerase subunit beta (Alkaliphilus metalliredigens (strain QYMF)).